Reading from the N-terminus, the 221-residue chain is Beta-phosphoglucomutase (221 aa).

The active-site Nucleophile is the D8. Mg(2+) contacts are provided by D8 and D10. The residue at position 8 (D8) is a 4-aspartylphosphate. The active-site Proton donor/acceptor is the D10. Beta-D-glucose 6-phosphate contacts are provided by D10, G46, V47, R49, S116, K117, and N118. Residue D170 participates in Mg(2+) binding.

Belongs to the HAD-like hydrolase superfamily. CbbY/CbbZ/Gph/YieH family. Monomer. Mg(2+) serves as cofactor. Post-translationally, autophosphorylated.

It is found in the cytoplasm. It catalyses the reaction beta-D-glucose 1-phosphate = beta-D-glucose 6-phosphate. With respect to regulation, activated by phosphorylation. Competitively inhibited by alpha-D-galactose-1-phosphate. Its function is as follows. Catalyzes the interconversion of D-glucose 1-phosphate (G1P) and D-glucose 6-phosphate (G6P), forming beta-D-glucose 1,6-(bis)phosphate (beta-G16P) as an intermediate. The beta-phosphoglucomutase (Beta-PGM) acts on the beta-C(1) anomer of G1P. Glucose or lactose are used in preference to maltose, which is only utilized after glucose or lactose has been exhausted. It plays a key role in the regulation of the flow of carbohydrate intermediates in glycolysis and the formation of the sugar nucleotide UDP-glucose. The protein is Beta-phosphoglucomutase of Lactococcus lactis subsp. lactis (strain IL1403) (Streptococcus lactis).